We begin with the raw amino-acid sequence, 283 residues long: Phosphatidylserine decarboxylase proenzyme (283 aa).

Active-site charge relay system; for autoendoproteolytic cleavage activity residues include Asp89, His146, and Ser249. Catalysis depends on Ser249, which acts as the Schiff-base intermediate with substrate; via pyruvic acid; for decarboxylase activity. Ser249 is modified (pyruvic acid (Ser); by autocatalysis).

This sequence belongs to the phosphatidylserine decarboxylase family. PSD-B subfamily. Prokaryotic type I sub-subfamily. In terms of assembly, heterodimer of a large membrane-associated beta subunit and a small pyruvoyl-containing alpha subunit. Requires pyruvate as cofactor. Post-translationally, is synthesized initially as an inactive proenzyme. Formation of the active enzyme involves a self-maturation process in which the active site pyruvoyl group is generated from an internal serine residue via an autocatalytic post-translational modification. Two non-identical subunits are generated from the proenzyme in this reaction, and the pyruvate is formed at the N-terminus of the alpha chain, which is derived from the carboxyl end of the proenzyme. The autoendoproteolytic cleavage occurs by a canonical serine protease mechanism, in which the side chain hydroxyl group of the serine supplies its oxygen atom to form the C-terminus of the beta chain, while the remainder of the serine residue undergoes an oxidative deamination to produce ammonia and the pyruvoyl prosthetic group on the alpha chain. During this reaction, the Ser that is part of the protease active site of the proenzyme becomes the pyruvoyl prosthetic group, which constitutes an essential element of the active site of the mature decarboxylase.

Its subcellular location is the cell membrane. The catalysed reaction is a 1,2-diacyl-sn-glycero-3-phospho-L-serine + H(+) = a 1,2-diacyl-sn-glycero-3-phosphoethanolamine + CO2. It participates in phospholipid metabolism; phosphatidylethanolamine biosynthesis; phosphatidylethanolamine from CDP-diacylglycerol: step 2/2. Catalyzes the formation of phosphatidylethanolamine (PtdEtn) from phosphatidylserine (PtdSer). The chain is Phosphatidylserine decarboxylase proenzyme from Legionella pneumophila (strain Lens).